Here is a 228-residue protein sequence, read N- to C-terminus: Urease accessory protein UreF 1 (228 aa).

The protein belongs to the UreF family. UreD, UreF and UreG form a complex that acts as a GTP-hydrolysis-dependent molecular chaperone, activating the urease apoprotein by helping to assemble the nickel containing metallocenter of UreC. The UreE protein probably delivers the nickel.

It localises to the cytoplasm. Required for maturation of urease via the functional incorporation of the urease nickel metallocenter. In terms of biological role, disruption of the ure1 gene cluster suggests that it protects brucellae during their passage through the stomach. The major route of infection in human brucellosis is oral. The protein is Urease accessory protein UreF 1 of Brucella abortus (strain 2308).